Reading from the N-terminus, the 333-residue chain is tRNA-modifying protein YgfZ (333 aa).

2 residues coordinate folate: Trp-33 and Trp-195.

Belongs to the tRNA-modifying YgfZ family.

The protein localises to the cytoplasm. Its function is as follows. Folate-binding protein involved in regulating the level of ATP-DnaA and in the modification of some tRNAs. It is probably a key factor in regulatory networks that act via tRNA modification, such as initiation of chromosomal replication. This is tRNA-modifying protein YgfZ from Pectobacterium atrosepticum (strain SCRI 1043 / ATCC BAA-672) (Erwinia carotovora subsp. atroseptica).